A 271-amino-acid polypeptide reads, in one-letter code: Colicin-M (271 aa).

The short motif at 2–9 (ETLTVHAP) is the TonB box element.

Functionally, colicins are polypeptide toxins produced by and active against E.coli and closely related bacteria. This is a calcium-requiring inhibitor for murein biosynthesis; it causes lysis of sensitive cells accompanied by murein degradation. The target site is possibly the cytoplasmic membrane. The chain is Colicin-M (cma) from Escherichia coli.